Consider the following 488-residue polypeptide: Probable cytosol aminopeptidase (488 aa).

Mn(2+) is bound by residues Lys251 and Asp256. Residue Lys263 is part of the active site. Residues Asp274, Asp333, and Glu335 each contribute to the Mn(2+) site. Arg337 is an active-site residue.

It belongs to the peptidase M17 family. Mn(2+) serves as cofactor.

It localises to the cytoplasm. The catalysed reaction is Release of an N-terminal amino acid, Xaa-|-Yaa-, in which Xaa is preferably Leu, but may be other amino acids including Pro although not Arg or Lys, and Yaa may be Pro. Amino acid amides and methyl esters are also readily hydrolyzed, but rates on arylamides are exceedingly low.. It carries out the reaction Release of an N-terminal amino acid, preferentially leucine, but not glutamic or aspartic acids.. Presumably involved in the processing and regular turnover of intracellular proteins. Catalyzes the removal of unsubstituted N-terminal amino acids from various peptides. This is Probable cytosol aminopeptidase from Cenarchaeum symbiosum (strain A).